The chain runs to 618 residues: Manganese lipoxygenase (618 aa).

An N-terminal signal peptide occupies residues 1–16; that stretch reads MRSRILAIVFAARHVA. The span at 36-45 shows a compositional bias: low complexity; the sequence is SSTTVLPSPT. Positions 36–58 are disordered; that stretch reads SSTTVLPSPTQYTLPNNDPNQGA. Over residues 46–58 the composition is skewed to polar residues; the sequence is QYTLPNNDPNQGA. The region spanning 47-618 is the Lipoxygenase domain; it reads YTLPNNDPNQ…PAVNPFFLSV (572 aa). Asn-60, Asn-91, Asn-106, Asn-116, and Asn-157 each carry an N-linked (GlcNAc...) asparagine glycan. Mn(2+)-binding residues include His-290, His-294, His-478, and Asn-482. N-linked (GlcNAc...) asparagine glycosylation occurs at Asn-513. Residue Val-618 participates in Mn(2+) binding.

The protein belongs to the lipoxygenase family. Manganese lipoxygenase subfamily. Mn(2+) serves as cofactor. In terms of processing, N- and O-glycosylated.

The protein resides in the secreted. It catalyses the reaction (9Z,12Z)-octadecadienoate + O2 = (11S)-hydroperoxy-(9Z,12Z)-octadecadienoate. The catalysed reaction is (9Z,12Z)-octadecadienoate + O2 = (13R)-hydroperoxy-(9Z,11E)-octadecadienoate. It carries out the reaction (9Z,12Z,15Z)-octadecatrienoate + O2 = (11S)-hydroperoxy-(9Z,12Z,15Z)-octadecatrienoate. The enzyme catalyses (9Z,12Z,15Z)-octadecatrienoate + O2 = (13R)-hydroperoxy-(9Z,11E,15Z)-octadecatrienoate. Its function is as follows. Lipoxygenase that metabolizes linoleic and alpha-linolenic acids to 11S- and 13R-hydroperoxy fatty acids. At the end of lipoxygenation, the intermediate product 11S-HPODE from linoleic acid is then transformed into 13R-HPODE as the final product. It also acts on alpha-linolenic acid producing 11S-HPOTrE and 13R-HPOTrE with subsequent transformation of 11S-HPOTrE to 13R-HPOTrE as final product. This Gaeumannomyces avenae (Oat take-all root rot fungus) protein is Manganese lipoxygenase.